Consider the following 246-residue polypeptide: MPRYLEGWLADVVKISLNRERINKVRERPIYLLSKFIKSTIDKNAIIAEFKRKSPSGLNENRDLEEYVKFMEENGAIGISVLTEEKYFGGSYSDLENAAKIVKIPILMKDFIVTEKQIDTAFNLGADAILLIVKILTERELINLYEYARNLGLEAIVEVTDENDLKIALMYDFNIIGVNARNLSSLEVNIRNARKILEMIPNDRIKIAESGIKNKEDIIELKKYGADAFLIGTTLMKDPNKIKELI.

This sequence belongs to the TrpC family.

The catalysed reaction is 1-(2-carboxyphenylamino)-1-deoxy-D-ribulose 5-phosphate + H(+) = (1S,2R)-1-C-(indol-3-yl)glycerol 3-phosphate + CO2 + H2O. It functions in the pathway amino-acid biosynthesis; L-tryptophan biosynthesis; L-tryptophan from chorismate: step 4/5. This is Indole-3-glycerol phosphate synthase from Sulfurisphaera tokodaii (strain DSM 16993 / JCM 10545 / NBRC 100140 / 7) (Sulfolobus tokodaii).